We begin with the raw amino-acid sequence, 671 residues long: Fusexin 1 (671 aa).

Residues 1–12 (MRAVSDFLKNKW) lie on the Cytoplasmic side of the membrane. The helical transmembrane segment at 13–33 (VAVPAVALLILSLGFLAQNYI) threads the bilayer. Residues 34-574 (TGSFVSGDQI…DPFCADGPLE (541 aa)) are Extracellular-facing. Disulfide bonds link cysteine 145–cysteine 180, cysteine 409–cysteine 452, cysteine 480–cysteine 500, and cysteine 513–cysteine 528. The fusion loop stretch occupies residues 168–173 (GAIADY). A helical transmembrane segment spans residues 575–595 (MLSKMFHLVAGTAVAFFTGSL). Residues 596–628 (GYRAGRWVDGEYQIKGGFDPLKSRSVSRAKRGR) lie on the Cytoplasmic side of the membrane. Residues 629–649 (FLIGLIAELVSFLLGFYVILL) form a helical membrane-spanning segment. Valine 650 is a topological domain (extracellular). The helical transmembrane segment at 651–671 (PIWAQLMVILGYVLFKYYTPF) threads the bilayer.

Belongs to the HAP2/GCS1 family. Fusexin 1 subfamily. In terms of assembly, homotrimer stabilized by interdomain contacts and numerous Ca(2+) and Na(+) ions.

Its subcellular location is the cell surface. It localises to the cell membrane. Its function is as follows. Exhibits fusogenic activity. Mediates cell-cell fusion in mammalian cells (bilateral fusion). The sequence is that of Fusexin 1 from Natrinema altunense (strain JCM 12890 / CGMCC 1.3731 / AJ2).